The primary structure comprises 355 residues: tRNA N6-adenosine threonylcarbamoyltransferase (355 aa).

Fe cation contacts are provided by His110 and His114. Substrate is bound by residues 132 to 136 (LVSGG), Asp165, Gly178, Asp182, and Asn288. Asp316 provides a ligand contact to Fe cation.

The protein belongs to the KAE1 / TsaD family. Fe(2+) serves as cofactor.

It localises to the cytoplasm. The catalysed reaction is L-threonylcarbamoyladenylate + adenosine(37) in tRNA = N(6)-L-threonylcarbamoyladenosine(37) in tRNA + AMP + H(+). Functionally, required for the formation of a threonylcarbamoyl group on adenosine at position 37 (t(6)A37) in tRNAs that read codons beginning with adenine. Is involved in the transfer of the threonylcarbamoyl moiety of threonylcarbamoyl-AMP (TC-AMP) to the N6 group of A37, together with TsaE and TsaB. TsaD likely plays a direct catalytic role in this reaction. The chain is tRNA N6-adenosine threonylcarbamoyltransferase from Lawsonia intracellularis (strain PHE/MN1-00).